A 189-amino-acid chain; its full sequence is Parkinson disease protein 7 homolog (189 aa).

A2 carries the post-translational modification N-acetylalanine. S-palmitoyl cysteine attachment occurs at residues C46 and C53. Y67 bears the Phosphotyrosine mark. The active-site Nucleophile is C106. A Cysteine sulfinic acid (-SO2H); alternate modification is found at C106. The S-palmitoyl cysteine; alternate moiety is linked to residue C106. Residue H126 is part of the active site. K130 participates in a covalent cross-link: Glycyl lysine isopeptide (Lys-Gly) (interchain with G-Cter in SUMO). At K148 the chain carries N6-acetyllysine. K182 bears the N6-succinyllysine mark.

This sequence belongs to the peptidase C56 family. As to quaternary structure, homodimer. Binds EFCAB6/DJBP and PIAS2. Part of a ternary complex containing PARK7, EFCAB6/DJBP and AR. Interacts (via N-terminus) with OTUD7B. Interacts with BBS1, HIPK1, CLCF1 and MTERF. Forms a complex with PINK1 and PRKN. Interacts (via C-terminus) with NCF1; the interaction is enhanced by LPS and modulates NCF1 phosphorylation and membrane translocation. Interacts with NENF. Requires Deglycase activity does not require glutathione as a cofactor, however, glycated glutathione constitutes a PARK7 substrate. as cofactor. Sumoylated on Lys-130 by PIAS2 or PIAS4; which is essential for cell-growth promoting activity and transforming activity. In terms of processing, undergoes cleavage of a C-terminal peptide and subsequent activation of protease activity in response to oxidative stress.

The protein resides in the cell membrane. Its subcellular location is the cytoplasm. It localises to the nucleus. The protein localises to the membrane raft. It is found in the mitochondrion. The protein resides in the endoplasmic reticulum. It catalyses the reaction N(omega)-(1-hydroxy-2-oxopropyl)-L-arginyl-[protein] + H2O = lactate + L-arginyl-[protein] + H(+). It carries out the reaction N(6)-(1-hydroxy-2-oxopropyl)-L-lysyl-[protein] + H2O = lactate + L-lysyl-[protein] + H(+). The catalysed reaction is S-(1-hydroxy-2-oxopropyl)-L-cysteinyl-[protein] + H2O = lactate + L-cysteinyl-[protein] + H(+). The enzyme catalyses N(omega)-(1-hydroxy-2-oxoethyl)-L-arginyl-[protein] + H2O = L-arginyl-[protein] + glycolate + H(+). It catalyses the reaction N(6)-(1-hydroxy-2-oxoethyl)-L-lysyl-[protein] + H2O = glycolate + L-lysyl-[protein] + H(+). It carries out the reaction S-(1-hydroxy-2-oxoethyl)-L-cysteinyl-[protein] + H2O = glycolate + L-cysteinyl-[protein] + H(+). The catalysed reaction is N(2)-(1-hydroxy-2-oxopropyl)-dGTP + H2O = lactate + dGTP + H(+). The enzyme catalyses N(2)-(1-hydroxy-2-oxopropyl)-GTP + H2O = lactate + GTP + H(+). It catalyses the reaction N(2)-(1-hydroxy-2-oxopropyl)-GDP + H2O = lactate + GDP + H(+). It carries out the reaction N(2)-(1-hydroxy-2-oxopropyl)-GMP + H2O = lactate + GMP + H(+). The catalysed reaction is N(2)-(1-hydroxy-2-oxoethyl)-dGTP + H2O = dGTP + glycolate + H(+). The enzyme catalyses N(2)-(1-hydroxy-2-oxoethyl)-GTP + H2O = glycolate + GTP + H(+). It catalyses the reaction N(2)-(1-hydroxy-2-oxoethyl)-GDP + H2O = glycolate + GDP + H(+). It carries out the reaction N(2)-(1-hydroxy-2-oxoethyl)-GMP + H2O = glycolate + GMP + H(+). The catalysed reaction is an N(2)-(1-hydroxy-2-oxopropyl)-guanosine in RNA + H2O = a guanosine in RNA + lactate + H(+). The enzyme catalyses an N(2)-(1-hydroxy-2-oxopropyl)-2'-deoxyguanosine in DNA + H2O = a 2'-deoxyguanosine in DNA + lactate + H(+). It catalyses the reaction an N(2)-(1-hydroxy-2-oxoethyl)-guanosine in RNA + H2O = a guanosine in RNA + glycolate + H(+). It carries out the reaction an N(2)-(1-hydroxy-2-oxoethyl)-2'-deoxyguanosine in DNA + H2O = a 2'-deoxyguanosine in DNA + glycolate + H(+). Functionally, multifunctional protein with controversial molecular function which plays an important role in cell protection against oxidative stress and cell death acting as oxidative stress sensor and redox-sensitive chaperone and protease. It is involved in neuroprotective mechanisms like the stabilization of NFE2L2 and PINK1 proteins, male fertility as a positive regulator of androgen signaling pathway as well as cell growth and transformation through, for instance, the modulation of NF-kappa-B signaling pathway. Has been described as a protein and nucleotide deglycase that catalyzes the deglycation of the Maillard adducts formed between amino groups of proteins or nucleotides and reactive carbonyl groups of glyoxals. But this function is rebuted by other works. As a protein deglycase, repairs methylglyoxal- and glyoxal-glycated proteins, and releases repaired proteins and lactate or glycolate, respectively. Deglycates cysteine, arginine and lysine residues in proteins, and thus reactivates these proteins by reversing glycation by glyoxals. Acts on early glycation intermediates (hemithioacetals and aminocarbinols), preventing the formation of advanced glycation endproducts (AGE) that cause irreversible damage. Also functions as a nucleotide deglycase able to repair glycated guanine in the free nucleotide pool (GTP, GDP, GMP, dGTP) and in DNA and RNA. Is thus involved in a major nucleotide repair system named guanine glycation repair (GG repair), dedicated to reversing methylglyoxal and glyoxal damage via nucleotide sanitization and direct nucleic acid repair. Protects histones from adduction by methylglyoxal, controls the levels of methylglyoxal-derived argininine modifications on chromatin. Able to remove the glycations and restore histone 3, histone glycation disrupts both local and global chromatin architecture by altering histone-DNA interactions as well as histone acetylation and ubiquitination levels. Displays a very low glyoxalase activity that may reflect its deglycase activity. Eliminates hydrogen peroxide and protects cells against hydrogen peroxide-induced cell death. Required for correct mitochondrial morphology and function as well as for autophagy of dysfunctional mitochondria. Plays a role in regulating expression or stability of the mitochondrial uncoupling proteins SLC25A14 and SLC25A27 in dopaminergic neurons of the substantia nigra pars compacta and attenuates the oxidative stress induced by calcium entry into the neurons via L-type channels during pacemaking. Regulates astrocyte inflammatory responses, may modulate lipid rafts-dependent endocytosis in astrocytes and neuronal cells. In pancreatic islets, involved in the maintenance of mitochondrial reactive oxygen species (ROS) levels and glucose homeostasis in an age- and diet dependent manner. Protects pancreatic beta cells from cell death induced by inflammatory and cytotoxic setting. Binds to a number of mRNAs containing multiple copies of GG or CC motifs and partially inhibits their translation but dissociates following oxidative stress. Metal-binding protein able to bind copper as well as toxic mercury ions, enhances the cell protection mechanism against induced metal toxicity. In macrophages, interacts with the NADPH oxidase subunit NCF1 to direct NADPH oxidase-dependent ROS production, and protects against sepsis. This chain is Parkinson disease protein 7 homolog, found in Chlorocebus aethiops (Green monkey).